The primary structure comprises 185 residues: Peptidoglycan-recognition protein SC1a/b (185 aa).

Positions 1–21 (MVSKVALLLAVLVCSQYMAQG) are cleaved as a signal peptide. One can recognise an N-acetylmuramoyl-L-alanine amidase domain in the interval 46–170 (SYAIIHHTAG…RQVSATECPG (125 aa)). Position 51 (His51) interacts with Zn(2+). Cys58 and Cys64 are joined by a disulfide. Residues His160 and Cys168 each contribute to the Zn(2+) site.

This sequence belongs to the N-acetylmuramoyl-L-alanine amidase 2 family. Requires Zn(2+) as cofactor.

It localises to the secreted. It carries out the reaction Hydrolyzes the link between N-acetylmuramoyl residues and L-amino acid residues in certain cell-wall glycopeptides.. Functionally, N-acetylmuramyl-L-alanine amidase involved in innate immunity by degrading bacterial peptidoglycans (PGN). Plays a scavenger role by digesting biologically active PGN into biologically inactive fragments. Has no direct bacteriolytic activity. This is Peptidoglycan-recognition protein SC1a/b (PGRP-SC1a) from Drosophila simulans (Fruit fly).